A 60-amino-acid chain; its full sequence is Small, acid-soluble spore protein H 1 (60 aa).

The interval 39–60 is disordered; that stretch reads IHPLDNPNQKQSVPVASLEEHS.

Belongs to the SspH family.

It is found in the spore core. In Geobacillus kaustophilus (strain HTA426), this protein is Small, acid-soluble spore protein H 1.